The chain runs to 364 residues: DNA replication and repair protein RecF (364 aa).

Residue 33–40 participates in ATP binding; that stretch reads GENGSGKT.

The protein belongs to the RecF family.

It is found in the cytoplasm. Its function is as follows. The RecF protein is involved in DNA metabolism; it is required for DNA replication and normal SOS inducibility. RecF binds preferentially to single-stranded, linear DNA. It also seems to bind ATP. This is DNA replication and repair protein RecF from Rickettsia felis (strain ATCC VR-1525 / URRWXCal2) (Rickettsia azadi).